Reading from the N-terminus, the 275-residue chain is Methylglyoxal reductase DkgA (275 aa).

The active-site Proton donor is the Tyr-51. His-107 lines the substrate pocket. Residue 187 to 241 coordinates NADP(+); the sequence is SPLAQGGKGVFDQKVIRDLADKYGKTPAQIVIRWHLDSGLVVIPKSVTPSRIAEN.

The protein belongs to the aldo/keto reductase family. Monomer.

It localises to the cytoplasm. The catalysed reaction is hydroxyacetone + NADP(+) = methylglyoxal + NADPH + H(+). Functionally, aldo-keto reductase that significantly contributes to cellular methylglyoxal detoxification by catalyzing the NADPH-dependent conversion of methylglyoxal to acetol. This Escherichia coli O157:H7 protein is Methylglyoxal reductase DkgA.